The following is a 150-amino-acid chain: UPF0178 protein Shewana3_1627 (150 aa).

Belongs to the UPF0178 family.

The protein is UPF0178 protein Shewana3_1627 of Shewanella sp. (strain ANA-3).